A 279-amino-acid polypeptide reads, in one-letter code: HTH-type transcriptional regulator BhcR (279 aa).

Residues 1–13 are compositionally biased toward basic residues; sequence MSVQIRKRGRPRG. The disordered stretch occupies residues 1-21; sequence MSVQIRKRGRPRGRAGGLGAE. Residues 26–87 form the HTH iclR-type domain; the sequence is IRALDRALDI…SQTQAWHVGP (62 aa). Residues 47 to 66 constitute a DNA-binding region (H-T-H motif); that stretch reads LTEIAQRLDMAPSTVHRVLV. Residues 102–271 form the IclR-ED domain; that stretch reads LVERARPLLR…ARELSFGMAP (170 aa).

In terms of biological role, transcriptional regulator of the bhc gene cluster involved in glycolate and glyoxylate assimilation via the beta-hydroxyaspartate cycle (BHAC). Glyoxylate negatively affects the interaction of BhcR with the promoter region of the bhc gene cluster. The sequence is that of HTH-type transcriptional regulator BhcR from Paracoccus denitrificans (strain Pd 1222).